The following is a 299-amino-acid chain: Ribonuclease H2 subunit A (299 aa).

An N-acetylmethionine modification is found at Met-1. The 224-residue stretch at 28-251 folds into the RNase H type-2 domain; sequence PCVLGVDEAG…AQSILESEAE (224 aa). The a divalent metal cation site is built by Asp-34, Glu-35, and Asp-142. Phosphothreonine occurs at positions 205 and 217. Residues 250-272 are disordered; the sequence is AEDVKWEDSETGDPKGPGKIKSY. Ser-258 is modified (phosphoserine).

It belongs to the RNase HII family. Eukaryotic subfamily. The RNase H2 complex is a heterotrimer composed of the catalytic subunit RNASEH2A and the non-catalytic subunits RNASEH2B and RNASEH2C. It depends on Mn(2+) as a cofactor. Mg(2+) serves as cofactor.

Its subcellular location is the nucleus. The enzyme catalyses Endonucleolytic cleavage to 5'-phosphomonoester.. Catalytic subunit of RNase HII, an endonuclease that specifically degrades the RNA of RNA:DNA hybrids. Participates in DNA replication, possibly by mediating the removal of lagging-strand Okazaki fragment RNA primers during DNA replication. Mediates the excision of single ribonucleotides from DNA:RNA duplexes. This Bos taurus (Bovine) protein is Ribonuclease H2 subunit A (RNASEH2A).